The following is a 211-amino-acid chain: Dephospho-CoA kinase (211 aa).

One can recognise a DPCK domain in the interval 2–204; the sequence is IIGLTGSIGM…SGVRRWRRGK (203 aa). 10–15 is an ATP binding site; the sequence is GMGKST.

This sequence belongs to the CoaE family.

It localises to the cytoplasm. The catalysed reaction is 3'-dephospho-CoA + ATP = ADP + CoA + H(+). It functions in the pathway cofactor biosynthesis; coenzyme A biosynthesis; CoA from (R)-pantothenate: step 5/5. In terms of biological role, catalyzes the phosphorylation of the 3'-hydroxyl group of dephosphocoenzyme A to form coenzyme A. This chain is Dephospho-CoA kinase, found in Rhodospirillum rubrum (strain ATCC 11170 / ATH 1.1.1 / DSM 467 / LMG 4362 / NCIMB 8255 / S1).